The primary structure comprises 31 residues: Nemertide alpha-7 (31 aa).

Disulfide bonds link Cys2/Cys16, Cys9/Cys20, and Cys15/Cys26. Pro29 bears the 4-hydroxyproline mark.

It belongs to the nemertide family. As to expression, confined to the epidermis and to the mucus layer.

It is found in the secreted. Its function is as follows. Potent toxin, demonstrating strong inhibitory effects on insect sodium channels (Nav) and reduced activity on mammalian sodium channels. Potently inhibits inactivation of insect sodium channels of B.germanica (BgNav1) (EC(50)=9.5 nM). The toxin also delays the inactivation of most mammalian Nav (human Nav1.1/SCN1A; EC(50)=171.5 nM, rat Nav1.2/SCN2A; EC(50)=50.4 nM, rat Nav1.3/SCN3A; EC(50)=170.2 nM, rat Nav1.4/SCN4A; EC(50)=810.6 nM, human Nav1.5/SCN5A; EC(50)=155.6 nM, mouse Nav1.6/SCN8A; EC(50)=147.6 nM, human Nav1.9/SCN9A; EC(50)=129 nM). Inactivation is completely prevented by a concentration of 1 uM, resulting in sustained, non-inactivating currents. In addition, the toxin significantly enhances the recovery from inactivation, and the open state is not required for the toxin to interact with the channel. In vivo, injection into brine shrimp (Artemia salina) stops movement or causes death after 24 hours (EC(50)=6.1 uM). The chain is Nemertide alpha-7 from Lineus ruber (Red bootlace).